The primary structure comprises 67 residues: MGEISITKLLVVAALVVLLFGTKKLRTLGGDLGAAIKGFKKAMNDDDAAAKKGADVDLQAEKLSHKE.

The chain crosses the membrane as a helical span at residues 4–21; sequence ISITKLLVVAALVVLLFG.

The protein belongs to the TatA/E family. TatE subfamily.

Its subcellular location is the cell inner membrane. Functionally, part of the twin-arginine translocation (Tat) system that transports large folded proteins containing a characteristic twin-arginine motif in their signal peptide across membranes. TatE shares overlapping functions with TatA. In Shigella flexneri, this protein is Probable Sec-independent protein translocase protein TatE.